Reading from the N-terminus, the 350-residue chain is Glyceraldehyde-3-phosphate dehydrogenase (350 aa).

Residues 13-14 and Gly118 contribute to the NAD(+) site; that span reads TI. 147 to 149 contributes to the D-glyceraldehyde 3-phosphate binding site; sequence SCN. Cys148 (nucleophile) is an active-site residue. Arg176 is a binding site for NAD(+). Residue 202–203 participates in D-glyceraldehyde 3-phosphate binding; sequence HG. Gln309 serves as a coordination point for NAD(+). Residues 327–350 form a disordered region; sequence LEEDPEASMDATDSALGVLNSPPL.

Belongs to the glyceraldehyde-3-phosphate dehydrogenase family. As to quaternary structure, homotetramer.

It localises to the cytoplasm. The catalysed reaction is D-glyceraldehyde 3-phosphate + phosphate + NADP(+) = (2R)-3-phospho-glyceroyl phosphate + NADPH + H(+). The enzyme catalyses D-glyceraldehyde 3-phosphate + phosphate + NAD(+) = (2R)-3-phospho-glyceroyl phosphate + NADH + H(+). It functions in the pathway carbohydrate degradation; glycolysis; pyruvate from D-glyceraldehyde 3-phosphate: step 1/5. This Methanopyrus kandleri (strain AV19 / DSM 6324 / JCM 9639 / NBRC 100938) protein is Glyceraldehyde-3-phosphate dehydrogenase.